We begin with the raw amino-acid sequence, 143 residues long: Transcription antitermination protein NusB (143 aa).

This sequence belongs to the NusB family.

In terms of biological role, involved in transcription antitermination. Required for transcription of ribosomal RNA (rRNA) genes. Binds specifically to the boxA antiterminator sequence of the ribosomal RNA (rrn) operons. The polypeptide is Transcription antitermination protein NusB (Anaeromyxobacter sp. (strain Fw109-5)).